The following is a 741-amino-acid chain: Catalase-peroxidase (741 aa).

Residues 1 to 21 form the signal peptide; the sequence is MRNFRRFTIALLVLFLGPIGA. The segment at residues 109-231 is a cross-link (tryptophyl-tyrosyl-methioninium (Trp-Tyr) (with M-257)); it reads WHSAGTYRIS…LAAVQMGLIY (123 aa). Catalysis depends on H110, which acts as the Proton acceptor. The tryptophyl-tyrosyl-methioninium (Tyr-Met) (with W-109) cross-link spans 231 to 257; it reads YVNPEGPNGNPDPLAAAKDIRETFGRM. Position 272 (H272) interacts with heme b.

Belongs to the peroxidase family. Peroxidase/catalase subfamily. In terms of assembly, homodimer or homotetramer. The cofactor is heme b. Formation of the three residue Trp-Tyr-Met cross-link is important for the catalase, but not the peroxidase activity of the enzyme.

It carries out the reaction H2O2 + AH2 = A + 2 H2O. The catalysed reaction is 2 H2O2 = O2 + 2 H2O. Its function is as follows. Bifunctional enzyme with both catalase and broad-spectrum peroxidase activity. The sequence is that of Catalase-peroxidase from Leptospira biflexa serovar Patoc (strain Patoc 1 / Ames).